The primary structure comprises 427 residues: 3-phosphoshikimate 1-carboxyvinyltransferase (427 aa).

Positions 22, 23, and 27 each coordinate 3-phosphoshikimate. Lysine 22 is a binding site for phosphoenolpyruvate. Residues glycine 94 and arginine 122 each contribute to the phosphoenolpyruvate site. Positions 165, 167, 313, and 340 each coordinate 3-phosphoshikimate. Glutamine 167 contributes to the phosphoenolpyruvate binding site. Aspartate 313 acts as the Proton acceptor in catalysis. Phosphoenolpyruvate-binding residues include arginine 344 and arginine 386.

This sequence belongs to the EPSP synthase family. Monomer.

Its subcellular location is the cytoplasm. The enzyme catalyses 3-phosphoshikimate + phosphoenolpyruvate = 5-O-(1-carboxyvinyl)-3-phosphoshikimate + phosphate. The protein operates within metabolic intermediate biosynthesis; chorismate biosynthesis; chorismate from D-erythrose 4-phosphate and phosphoenolpyruvate: step 6/7. Its function is as follows. Catalyzes the transfer of the enolpyruvyl moiety of phosphoenolpyruvate (PEP) to the 5-hydroxyl of shikimate-3-phosphate (S3P) to produce enolpyruvyl shikimate-3-phosphate and inorganic phosphate. This Koribacter versatilis (strain Ellin345) protein is 3-phosphoshikimate 1-carboxyvinyltransferase.